The sequence spans 462 residues: A-type ATP synthase subunit B (462 aa).

The protein belongs to the ATPase alpha/beta chains family. Has multiple subunits with at least A(3), B(3), C, D, E, F, H, I and proteolipid K(x).

It localises to the cell membrane. Its function is as follows. Component of the A-type ATP synthase that produces ATP from ADP in the presence of a proton gradient across the membrane. The B chain is a regulatory subunit. This chain is A-type ATP synthase subunit B, found in Cenarchaeum symbiosum (strain A).